The sequence spans 75 residues: MAYRRRKKKIKKCRLCEMKLDYVDYKDTRLLSEFLTDKGKIIPKRLTGNCSKHQRMVKVAIKRARQMGLLPYLKI.

It belongs to the bacterial ribosomal protein bS18 family. Part of the 30S ribosomal subunit. Forms a tight heterodimer with protein bS6.

In terms of biological role, binds as a heterodimer with protein bS6 to the central domain of the 16S rRNA, where it helps stabilize the platform of the 30S subunit. The chain is Small ribosomal subunit protein bS18 from Thermotoga maritima (strain ATCC 43589 / DSM 3109 / JCM 10099 / NBRC 100826 / MSB8).